Reading from the N-terminus, the 449-residue chain is Dynein regulatory complex protein 10 (449 aa).

Residues 90–125 (AVREHEDLCQVLLENVRCLKEKERQLQEQKEAEEEG) are a coiled coil. Residues 400 to 429 (MVRAATLIQALWKGYLVRSLLRSKKKRGKG) form the IQ domain. Residues 422–449 (SKKKRGKGKAKDKEKGKQKGKEKGKGKK) form a disordered region. A compositionally biased stretch (basic and acidic residues) spans 430–449 (KAKDKEKGKQKGKEKGKGKK).

Belongs to the DRC10 family. As to quaternary structure, component of the nexin-dynein regulatory complex (N-DRC). Interacts with CFAP52.

Its subcellular location is the cytoplasm. The protein localises to the cytoskeleton. It is found in the flagellum axoneme. Functionally, component of the nexin-dynein regulatory complex (N-DRC), a key regulator of ciliary/flagellar motility which maintains the alignment and integrity of the distal axoneme and regulates microtubule sliding in motile axonemes. This Homo sapiens (Human) protein is Dynein regulatory complex protein 10 (IQCD).